A 633-amino-acid chain; its full sequence is tRNA uridine 5-carboxymethylaminomethyl modification enzyme MnmG (633 aa).

18-23 (GAGHAG) is a binding site for FAD. Residues 208–232 (PRVNGNTIDFDKTEEQPGDKTPNHF) form a disordered region. The segment covering 216–229 (DFDKTEEQPGDKTP) has biased composition (basic and acidic residues). 279–293 (GPRYCPSIEDKIVRF) provides a ligand contact to NAD(+).

It belongs to the MnmG family. Homodimer. Heterotetramer of two MnmE and two MnmG subunits. Requires FAD as cofactor.

The protein resides in the cytoplasm. NAD-binding protein involved in the addition of a carboxymethylaminomethyl (cmnm) group at the wobble position (U34) of certain tRNAs, forming tRNA-cmnm(5)s(2)U34. The polypeptide is tRNA uridine 5-carboxymethylaminomethyl modification enzyme MnmG (Lacticaseibacillus paracasei (strain ATCC 334 / BCRC 17002 / CCUG 31169 / CIP 107868 / KCTC 3260 / NRRL B-441) (Lactobacillus paracasei)).